Consider the following 122-residue polypeptide: S-adenosylmethionine decarboxylase proenzyme (122 aa).

The active-site Schiff-base intermediate with substrate; via pyruvic acid is the S61. The residue at position 61 (S61) is a Pyruvic acid (Ser); by autocatalysis. The active-site Proton acceptor; for processing activity is H66. The Proton donor; for catalytic activity role is filled by C81.

The protein belongs to the prokaryotic AdoMetDC family. Type 1 subfamily. Heterotetramer of two alpha and two beta chains arranged as a dimer of alpha/beta heterodimers. It depends on pyruvate as a cofactor. In terms of processing, is synthesized initially as an inactive proenzyme. Formation of the active enzyme involves a self-maturation process in which the active site pyruvoyl group is generated from an internal serine residue via an autocatalytic post-translational modification. Two non-identical subunits are generated from the proenzyme in this reaction, and the pyruvate is formed at the N-terminus of the alpha chain, which is derived from the carboxyl end of the proenzyme. The post-translation cleavage follows an unusual pathway, termed non-hydrolytic serinolysis, in which the side chain hydroxyl group of the serine supplies its oxygen atom to form the C-terminus of the beta chain, while the remainder of the serine residue undergoes an oxidative deamination to produce ammonia and the pyruvoyl group blocking the N-terminus of the alpha chain.

The catalysed reaction is S-adenosyl-L-methionine + H(+) = S-adenosyl 3-(methylsulfanyl)propylamine + CO2. Its pathway is amine and polyamine biosynthesis; S-adenosylmethioninamine biosynthesis; S-adenosylmethioninamine from S-adenosyl-L-methionine: step 1/1. Functionally, catalyzes the decarboxylation of S-adenosylmethionine to S-adenosylmethioninamine (dcAdoMet), the propylamine donor required for the synthesis of the polyamines spermine and spermidine from the diamine putrescine. The polypeptide is S-adenosylmethionine decarboxylase proenzyme (Prochlorococcus marinus (strain MIT 9211)).